The primary structure comprises 433 residues: Enolase (433 aa).

Gln-166 contributes to the (2R)-2-phosphoglycerate binding site. Glu-208 serves as the catalytic Proton donor. Asp-245, Glu-289, and Asp-316 together coordinate Mg(2+). Lys-341, Arg-370, Ser-371, and Lys-392 together coordinate (2R)-2-phosphoglycerate. The active-site Proton acceptor is the Lys-341.

Belongs to the enolase family. The cofactor is Mg(2+).

It is found in the cytoplasm. The protein resides in the secreted. The protein localises to the cell surface. It carries out the reaction (2R)-2-phosphoglycerate = phosphoenolpyruvate + H2O. The protein operates within carbohydrate degradation; glycolysis; pyruvate from D-glyceraldehyde 3-phosphate: step 4/5. Catalyzes the reversible conversion of 2-phosphoglycerate (2-PG) into phosphoenolpyruvate (PEP). It is essential for the degradation of carbohydrates via glycolysis. The protein is Enolase of Acetivibrio thermocellus (strain ATCC 27405 / DSM 1237 / JCM 9322 / NBRC 103400 / NCIMB 10682 / NRRL B-4536 / VPI 7372) (Clostridium thermocellum).